A 603-amino-acid polypeptide reads, in one-letter code: Probable HECT-type ubiquitin ligase-interacting protein creD (603 aa).

Disordered stretches follow at residues 375-398 and 432-499; these read ELDPNGYRTPGPGSGPGTPFGTLS and LNIT…MATP. Basic and acidic residues predominate over residues 443–455; it reads TDHESQNDSEHRR. The segment covering 465-481 has biased composition (low complexity); it reads PSSGSNSHSPSSPVLSR. Basic and acidic residues predominate over residues 482 to 492; it reads RPSDEVDHEHV.

Belongs to the arrestin family. In terms of assembly, interacts with hulA.

Functionally, component of the regulatory network controlling carbon source utilization through ubiquitination and deubiquitination involving creA, creB, creC, creD and acrB. May be involved in signaling by recognizing appropriately phosphorylated substrates via its arrestin domains and then recruit a HECT-type ubiquitin ligase such as hulA, leading to ubiquitination of the substrate, providing a link between ubiquitination and phosphorylation in protein regulation and stability. This Aspergillus flavus (strain ATCC 200026 / FGSC A1120 / IAM 13836 / NRRL 3357 / JCM 12722 / SRRC 167) protein is Probable HECT-type ubiquitin ligase-interacting protein creD (creD).